Consider the following 338-residue polypeptide: Tagatose 1,6-diphosphate aldolase (338 aa).

Belongs to the aldolase LacD family.

The catalysed reaction is D-tagatofuranose 1,6-bisphosphate = D-glyceraldehyde 3-phosphate + dihydroxyacetone phosphate. It participates in carbohydrate metabolism; D-tagatose 6-phosphate degradation; D-glyceraldehyde 3-phosphate and glycerone phosphate from D-tagatose 6-phosphate: step 2/2. In Listeria monocytogenes serotype 4a (strain HCC23), this protein is Tagatose 1,6-diphosphate aldolase.